The primary structure comprises 905 residues: Translation initiation factor IF-2 (905 aa).

Disordered regions lie at residues 52–84 (QSHGQKEKRRISLKSKTTSTARVTGSSGKSKSV), 116–230 (AKKR…QKKT), and 269–318 (FEKE…FEKP). Polar residues predominate over residues 65-84 (KSKTTSTARVTGSSGKSKSV). The segment covering 116–138 (AKKRAEEEAKKREQVKKEAEERQ) has biased composition (basic and acidic residues). Low complexity predominate over residues 165–178 (VVVKKGSKAAAAAK). 2 stretches are compositionally biased toward basic and acidic residues: residues 190–230 (PKVE…QKKT) and 269–278 (FEKERREIKR). Residues 406-575 (TRPPVVTIMG…NLQAELMELE (170 aa)) form the tr-type G domain. The segment at 415–422 (GHVDHGKT) is G1. 415-422 (GHVDHGKT) provides a ligand contact to GTP. The tract at residues 440 to 444 (GITQH) is G2. The G3 stretch occupies residues 461-464 (DTPG). Residues 461–465 (DTPGH) and 515–518 (NKMD) contribute to the GTP site. The G4 stretch occupies residues 515–518 (NKMD). A G5 region spans residues 551 to 553 (SAK).

This sequence belongs to the TRAFAC class translation factor GTPase superfamily. Classic translation factor GTPase family. IF-2 subfamily.

The protein localises to the cytoplasm. In terms of biological role, one of the essential components for the initiation of protein synthesis. Protects formylmethionyl-tRNA from spontaneous hydrolysis and promotes its binding to the 30S ribosomal subunits. Also involved in the hydrolysis of GTP during the formation of the 70S ribosomal complex. This Psychrobacter sp. (strain PRwf-1) protein is Translation initiation factor IF-2.